A 264-amino-acid polypeptide reads, in one-letter code: tRNA (guanine-N(1)-)-methyltransferase (264 aa).

Residues Gly-125 and 145–150 (LGDFVL) each bind S-adenosyl-L-methionine.

Belongs to the RNA methyltransferase TrmD family. Homodimer.

The protein localises to the cytoplasm. The catalysed reaction is guanosine(37) in tRNA + S-adenosyl-L-methionine = N(1)-methylguanosine(37) in tRNA + S-adenosyl-L-homocysteine + H(+). Its function is as follows. Specifically methylates guanosine-37 in various tRNAs. This is tRNA (guanine-N(1)-)-methyltransferase from Burkholderia ambifaria (strain MC40-6).